Consider the following 198-residue polypeptide: MSSYLLVLVAILGFAYAEGDYSLCQQREKLDDDMREMFTELHNGYRAAFARNYKTSKMRTMVYDCTLEEKAYKSAEKCSEEPSSEEENVDVFSAATLNIPLEAGNSWWSEIFELRGKVYNKNGKTSNIANMVWDSHDKLGCAVVDCSGKTHVVCQYGPEAKGDGKTIYEEGAPCSRCSDYGAGVTCDDDWQNLLCIGH.

A signal peptide spans 1–17 (MSSYLLVLVAILGFAYA). Disulfide bonds link cysteine 24–cysteine 65, cysteine 78–cysteine 146, cysteine 141–cysteine 154, cysteine 174–cysteine 186, and cysteine 177–cysteine 195.

Belongs to the CRISP family. As to quaternary structure, monomer. Detected in cephalic glands.

Its subcellular location is the secreted. Hookworms inhibitor of platelet aggregation and adhesion. Native protein inhibits platelet aggregation induced by ADP, epinephrine, and thrombin. In addition, it prevents adhesion of resting platelets to immobilized fibrinogen and collagen. May act by binding to glycoprotein IIb/IIIa (ITGA2B/ITGB3) and integrin alpha-2/beta-1 (ITGA1/ITGB1), respectively. It is noteworthy that the recombinant protein fails to inhibit binding to fibrinogen (through ITGA2B/ITGB3) and collagen (through ITGA1/ITGB1). The polypeptide is Hookworm platelet inhibitor 1 (Ancylostoma caninum (Dog hookworm)).